Consider the following 453-residue polypeptide: Tetrahydroanabasine acetyltransferase (453 aa).

Catalysis depends on proton acceptor residues His163 and Asp388.

Belongs to the plant acyltransferase family. Monomer.

It catalyses the reaction tetrahydroanabasine + acetyl-CoA = ammodendrine + CoA. The protein operates within alkaloid biosynthesis. Its function is as follows. Tetrahydroanabasine acetyltransferase involved in the accumulation of quinolizidine type antinutritional alkaloids (QAs). QAs impart a bitter taste to plants, acting as repellents and toxicants for herbivores and predators, and possess a variety of pharmacological effects, including sedative, anticonvulsant, anti-inflammatory, antiviral, antitumor, antipyretic, anti-hepatitis B, antifibrotic, antiallergic, antidiarrheal, analgesic and antimicrobial activities. Mediates the conversion of tetrahydroanabasine into ammodendrine. This chain is Tetrahydroanabasine acetyltransferase, found in Lupinus angustifolius (Narrow-leaved blue lupine).